A 331-amino-acid polypeptide reads, in one-letter code: UPF0194 membrane protein Ent638_1286 (331 aa).

Positions 1–16 (MKKPVVVILAVVVLLA) are cleaved as a signal peptide. Residues 107–208 (EEVAQAEAAV…LDLHDTTLIA (102 aa)) are a coiled coil.

The protein belongs to the UPF0194 family.

The protein resides in the periplasm. The sequence is that of UPF0194 membrane protein Ent638_1286 from Enterobacter sp. (strain 638).